The following is a 363-amino-acid chain: Protein-arginine kinase (363 aa).

The 231-residue stretch at 24–254 folds into the Phosphagen kinase C-terminal domain; sequence IVLSSRIRLA…AQLIEQERSA (231 aa). Residue 27–31 coordinates ATP; the sequence is SSRIR. A phosphoarginine; by autocatalysis mark is found at Arg29, Arg40, and Arg86. Residues His92, Arg125, and 176–180 each bind ATP; that span reads RASVM. Residue Arg190 is modified to Phosphoarginine; by autocatalysis. Position 207–212 (207–212) interacts with ATP; the sequence is RGIYGE. Phosphoarginine; by autocatalysis occurs at positions 255, 269, and 272. An RDXXRA motif of the pArg binding pocket involved in allosteric regulation motif is present at residues 337-342; the sequence is RDIRRA. Residue Arg346 is modified to Phosphoarginine; by autocatalysis.

It belongs to the ATP:guanido phosphotransferase family. Interacts with CtsR in its autophosphorylated form. Interacts with McsA in nonstressed as well as in heat-stressed cells, whereas strongly interacts with ClpC only in nonstressed cells. Post-translationally, autophosphorylated on Arg residues. Phosphorylation on Arg-40 and Arg-86 are up-regulated upon stress conditions.

Its subcellular location is the cytoplasm. The enzyme catalyses L-arginyl-[protein] + ATP = N(omega)-phospho-L-arginyl-[protein] + ADP + H(+). With respect to regulation, appears to be allosterically activated by the binding of pArg-containing polypeptides to the pArg-binding pocket localized in the C-terminal domain of McsB. The McsB kinase is inhibited in nonstressed cells by direct interaction with ClpC; upon heat exposure, the interaction of McsB with ClpC is dramatically decreased, leading to McsB release and activation during heat stress. Its kinase activity is counteracted by the protein-arginine-phosphatase YwlE in vivo. Requires McsA for full kinase activity. Its function is as follows. Catalyzes the specific phosphorylation of arginine residues in a large number of proteins. Is part of the bacterial stress response system, where it is involved in regulating the global heat shock repressor CtsR; phosphorylates arginine residues in the winged helix-turn-helix domain of CtsR, thereby preventing its binding to DNA and consequently inducing the expression of repressed genes. The transcriptional repressor HrcA, the chaperone GroEL, the unfoldase ClpC, together with several ribosomal subunits, represent other physiological targets of McsB under stress conditions. Protein arginine phosphorylation has a physiologically important role and is involved in the regulation of many critical cellular processes, such as protein homeostasis, motility, competence, and stringent and stress responses, by regulating gene expression and protein activity. Functions as an adapter whose kinase activity is required for ClpCP-mediated degradation of CtsR during heat stress. Is required for the delocalization of competence proteins from the cell poles, probably via a role in the degradation of anchor proteins. This is Protein-arginine kinase from Bacillus subtilis (strain 168).